The primary structure comprises 139 residues: Large ribosomal subunit protein uL16 (139 aa).

Residues 1–16 (MLIPKRTKYRKQHRPV) show a composition bias toward basic residues. The segment at 1–22 (MLIPKRTKYRKQHRPVRSGMSK) is disordered.

This sequence belongs to the universal ribosomal protein uL16 family. In terms of assembly, part of the 50S ribosomal subunit.

Binds 23S rRNA and is also seen to make contacts with the A and possibly P site tRNAs. The chain is Large ribosomal subunit protein uL16 from Bifidobacterium longum subsp. infantis (strain ATCC 15697 / DSM 20088 / JCM 1222 / NCTC 11817 / S12).